The following is a 199-amino-acid chain: Transgelin-3 (199 aa).

In terms of domain architecture, Calponin-homology (CH) spans 24–136; sequence ADLENKLVDW…RTLMALGSVA (113 aa). Ser163 is subject to Phosphoserine. One copy of the Calponin-like repeat lies at 174–199; sequence IGLQMGSNKGASQAGMTGYGMPRQIM. Residues 176-188 are compositionally biased toward polar residues; the sequence is LQMGSNKGASQAG. Residues 176-199 are disordered; the sequence is LQMGSNKGASQAGMTGYGMPRQIM.

The protein belongs to the calponin family. As to expression, widely expressed in the brain. Expression is increased in the superior frontal cortex of alcoholics, but not in the motor cortex or cerebellum.

In Homo sapiens (Human), this protein is Transgelin-3 (TAGLN3).